The primary structure comprises 942 residues: MSSSSQAMLQKSDSIAEKMPDALKQSRYHMKRCFASFVGGGKKLMKREHLMNEIEKCIEDSRERSKILEGLFGYILTCTQEAAVVPPFVALAARPNPGFWEYVKVNSGDLTVDEITATDYLKLKESVFDESWSKDENALEIDFGAIDFTSPRLSLSSSIGKGADYISKFISSKLGGKSDKLEPLLNYLLRLNHHGENLMINDDLNTVAKLQKSLMLAVIVVSTYSKHTPYETFAQRLKEMGFEKGWGDTAERVKETMIILSEVLEAPDNGKLDLLFSRLPTVFNVVIFSVHGYFGQQDVLGLPDTGGQVVYILDQVRALEEELLIRINQQGLGFKPQILVVTRLIPEARGTKCDQELEAIEGTKHSHILRVPFVTNKGVLRQWVSRFDIYPYLERFTQDATSKILQRLDCKPDLIIGNYTDGNLVASLMATKLGVTQGTIAHALEKTKYEDSDAKWKELDPKYHFSCQFTADLIAMNVTDFIITSTYQEIAGSKDRPGQYESHTAFTMPGLCRVVSGIDVFDPKFNIAAPGADQSVYFPYTEKDKRFTKFHPSIQELLYNEKDNAEHMGYLADREKPIIFSMARLDTVKNITGLVEWYGKDKRLREMANLVVVAGFFDMSKSNDREEKAEIKKMHDLIEKYKLKGKFRWIAAQTDRYRNSELYRCIADTKGVFVQPALYEAFGLTVIEAMNCGLPTFATNQGGPAEIIVDGVSGFHIDPNNGDESVTKIGDFFSKCRSDGLYWDNISKGGLKRIYECYTWKIYAEKLLKMGSLYGFWRQVNEDQKKAKKRYIEMLYNLQFKQLTKKVTIPEDKPLPLRLASLRNLLPKKTTNLGAGSKQKEVTETEKTKQKSKDGQEQHDVKVGEREVREGLLAADASERVKKVLESSEEKQKLEKMKIAYGQQHSQGASPVRNLFWSVVVCLYICYILKQRFFGANSAQEY.

Residues 281-759 are GT-B glycosyltransferase; that stretch reads TVFNVVIFSV…GLKRIYECYT (479 aa). The interval 830–862 is disordered; the sequence is TTNLGAGSKQKEVTETEKTKQKSKDGQEQHDVK. The segment covering 838–862 has biased composition (basic and acidic residues); that stretch reads KQKEVTETEKTKQKSKDGQEQHDVK.

The protein belongs to the glycosyltransferase 1 family. Plant sucrose synthase subfamily. Detected in the whole plant but more precisely confined to the vasculature in cotyledons, leaves, petals, anthers and roots.

Its subcellular location is the secreted. The protein resides in the cell wall. It carries out the reaction an NDP-alpha-D-glucose + D-fructose = a ribonucleoside 5'-diphosphate + sucrose + H(+). Its function is as follows. Sucrose-cleaving enzyme that provides UDP-glucose and fructose for various metabolic pathways. Functions in callose synthesis at the site of phloem sieve elements. The polypeptide is Sucrose synthase 6 (SUS6) (Arabidopsis thaliana (Mouse-ear cress)).